The primary structure comprises 644 residues: MEAVVNSDVFLTSNAGLKSSYTNQTLSLVDEDHIHTSDKSLSCSVCNSLSQIVDDDFISAGARNQRTKPKRAGNNQSQQPIKKDCMVSIDEVASTHDWSTRLRNDGNAIAKYLTTNKYDTSNFTIQDMLNIMNKLNIVRTNRNELFQLLTHVKSTLNNASVSVKCTHPLVLIHSRASPRIGDQLKELDKIYSPSNHHILLSTTRFQSMHFTDMSSSQDLSFIYRKPETNYYIHPILMALFGIKLPALENAYVHGDTYSLIQQLYEFRKVKSYNYMLLVNRLTEDNPIVITGVSDLISTEIQRANMHTMIRKAIMNIRMGIFYCNDDDAVDPHLMKIIHTGCSQVMTDEEQILASILSIVGFRPTLVSVARPINGISYDMKLQAAPYIVVNPMKMITTSDSPISINSKDIYSMAFDGNSGRVVFAPPNIGYGRCSGVTHIDPLGTNVMGSAVHSPVIVNGAMMFYVERRQNKNMFGGECYTGFRSLIDDTPIDVSPEIMLNGIMYRLKSAVCYKLGDQFFDCGSSDIFLKGHYTILFTENGPWMYDPLSVFNPGARNARLMRALKNQYKKLSMDSDDGFYEWLNGDGSVFAASKQQMLMNHVANFDDDLLTMEEAMSMISRHCCILIYAQDYDQYISARHITELF.

Positions 1–61 (MEAVVNSDVF…IVDDDFISAG (61 aa)) are excised as a propeptide.

Belongs to the orthopoxvirus OPG129 family. In terms of processing, the 73-kDa precursor is cleaved to a mature protein of 60 kDa during virion maturation. Proteolytic cleavage of major core proteins OPG129, OPG136, and OPG098, which occurs at a late stage of core formation, is required for production of infectious mature virions (MV).

It localises to the virion. Functionally, major component of the virion core that undergoes proteolytic processing during the immature virion (IV) to mature virion (MV) transition. Essential for the formation of a structurally normal core. The sequence is that of Major core protein OPG129 (OPG129) from Homo sapiens (Human).